Here is a 488-residue protein sequence, read N- to C-terminus: Sterol 14-demethylase (488 aa).

Residues 12–32 (TGLVIVATLVIAKLIFSFFTS) traverse the membrane as a helical segment. Residue C433 participates in heme binding.

Belongs to the cytochrome P450 family. Heme is required as a cofactor. As to expression, expressed in leaves, roots, stems, siliques, flowers, flower buds and seedlings.

It is found in the membrane. The enzyme catalyses a 14alpha-methyl steroid + 3 reduced [NADPH--hemoprotein reductase] + 3 O2 = a Delta(14) steroid + formate + 3 oxidized [NADPH--hemoprotein reductase] + 4 H2O + 4 H(+). Involved in sterol biosynthesis. Catalyzes the 14-alpha demethylation of obtusifoliol to 4 alpha-methyl-5 alpha-ergosta-8,14,24(28)-trien-3 beta-ol. This Arabidopsis thaliana (Mouse-ear cress) protein is Sterol 14-demethylase (CYP51G1).